A 325-amino-acid polypeptide reads, in one-letter code: Glycerol-3-phosphate dehydrogenase [NAD(P)+] (325 aa).

NADPH-binding residues include Ser-14, Phe-15, Arg-35, and Lys-109. Sn-glycerol 3-phosphate contacts are provided by Lys-109 and Gly-137. Ala-141 serves as a coordination point for NADPH. Residues Lys-192, Asp-247, Ser-257, Arg-258, and Asn-259 each coordinate sn-glycerol 3-phosphate. Lys-192 functions as the Proton acceptor in the catalytic mechanism. NADPH is bound at residue Arg-258. Residues Leu-282 and Glu-284 each coordinate NADPH.

The protein belongs to the NAD-dependent glycerol-3-phosphate dehydrogenase family.

The protein resides in the cytoplasm. The enzyme catalyses sn-glycerol 3-phosphate + NAD(+) = dihydroxyacetone phosphate + NADH + H(+). It carries out the reaction sn-glycerol 3-phosphate + NADP(+) = dihydroxyacetone phosphate + NADPH + H(+). The protein operates within membrane lipid metabolism; glycerophospholipid metabolism. In terms of biological role, catalyzes the reduction of the glycolytic intermediate dihydroxyacetone phosphate (DHAP) to sn-glycerol 3-phosphate (G3P), the key precursor for phospholipid synthesis. The sequence is that of Glycerol-3-phosphate dehydrogenase [NAD(P)+] from Rickettsia africae (strain ESF-5).